The sequence spans 213 residues: Orotate phosphoribosyltransferase (213 aa).

A 5-phospho-alpha-D-ribose 1-diphosphate-binding site is contributed by Lys26. 34–35 contributes to the orotate binding site; sequence FF. Residues 72 to 73, Arg99, Lys100, Lys103, His105, and 124 to 132 contribute to the 5-phospho-alpha-D-ribose 1-diphosphate site; these read YK and DDVITAGTA. Thr128 and Arg156 together coordinate orotate.

This sequence belongs to the purine/pyrimidine phosphoribosyltransferase family. PyrE subfamily. In terms of assembly, homodimer. Mg(2+) is required as a cofactor.

It carries out the reaction orotidine 5'-phosphate + diphosphate = orotate + 5-phospho-alpha-D-ribose 1-diphosphate. It functions in the pathway pyrimidine metabolism; UMP biosynthesis via de novo pathway; UMP from orotate: step 1/2. Catalyzes the transfer of a ribosyl phosphate group from 5-phosphoribose 1-diphosphate to orotate, leading to the formation of orotidine monophosphate (OMP). This chain is Orotate phosphoribosyltransferase, found in Pseudomonas putida (strain W619).